A 505-amino-acid chain; its full sequence is ATP synthase subunit alpha (505 aa).

ATP is bound at residue 169–176 (GDRKTGKT).

Belongs to the ATPase alpha/beta chains family. F-type ATPases have 2 components, CF(1) - the catalytic core - and CF(0) - the membrane proton channel. CF(1) has five subunits: alpha(3), beta(3), gamma(1), delta(1), epsilon(1). CF(0) has three main subunits: a(1), b(2) and c(9-12). The alpha and beta chains form an alternating ring which encloses part of the gamma chain. CF(1) is attached to CF(0) by a central stalk formed by the gamma and epsilon chains, while a peripheral stalk is formed by the delta and b chains.

Its subcellular location is the cell membrane. The catalysed reaction is ATP + H2O + 4 H(+)(in) = ADP + phosphate + 5 H(+)(out). Its function is as follows. Produces ATP from ADP in the presence of a proton gradient across the membrane. The alpha chain is a regulatory subunit. This is ATP synthase subunit alpha from Leuconostoc mesenteroides subsp. mesenteroides (strain ATCC 8293 / DSM 20343 / BCRC 11652 / CCM 1803 / JCM 6124 / NCDO 523 / NBRC 100496 / NCIMB 8023 / NCTC 12954 / NRRL B-1118 / 37Y).